A 915-amino-acid chain; its full sequence is Clathrin coat assembly protein AP180 (915 aa).

In terms of domain architecture, ENTH spans 14-145 (QYSVTGSAVA…FSYRQMAFDF (132 aa)). Disordered regions lie at residues 285 to 326 (LEGK…DTSP), 391 to 425 (SVPS…ATTA), and 497 to 522 (PETS…PSPA). Ser-296, Ser-300, and Ser-306 each carry phosphoserine. Residues 302–324 (LSKSSPATTVTSPNSTPAKTIDT) are compositionally biased toward polar residues. O-linked (GlcNAc) threonine glycosylation is present at Thr-310. Ser-313 is subject to Phosphoserine. Residue Thr-317 is modified to Phosphothreonine. Composition is skewed to low complexity over residues 410-425 (TTTT…ATTA) and 500-511 (SAPVVTPTASTA). Positions 512–522 (PPVPATAPSPA) are enriched in pro residues. Phosphoserine is present on residues Ser-594, Ser-600, Pro-627, Ser-640, and Ser-646. A compositionally biased stretch (low complexity) spans 720–735 (TTPSTSSSSSFDPSGD). The interval 720 to 765 (TTPSTSSSSSFDPSGDLLMPTMAPSGQPAPVSMVPPSPAMSASKGL) is disordered. Ser-775 carries the post-translational modification Phosphoserine. A disordered region spans residues 817–855 (SAGVPPQGTVPPTSSVPPGAGAPSVGQPGAGYGMPPAGT). Arg-873 carries the asymmetric dimethylarginine; alternate modification. Arg-873 carries the post-translational modification Omega-N-methylarginine; alternate. Positions 875 to 915 (PFGAAAVPGTQLSPSPTPATQSPKKPPAKDPLADLNIKDFL) are disordered. Residues 884–896 (TQLSPSPTPATQS) are compositionally biased toward polar residues. The segment covering 901–915 (PAKDPLADLNIKDFL) has biased composition (basic and acidic residues).

It belongs to the PICALM/SNAP91 family. Binds AP2A2. Interacts with AP2B1; clathrin competes with SNAP91. Post-translationally, thr-310 can be modified by the addition of N-acetylglucosamine which can be further phosphorylated. The form with phosphorylated O-linked N-acetylglucosamine is predominant in brain synaptosomes. There is no evidence for direct Thr-310 phosphorylation.

It is found in the cell membrane. It localises to the membrane. The protein localises to the coated pit. Its function is as follows. Adaptins are components of the adapter complexes which link clathrin to receptors in coated vesicles. Clathrin-associated protein complexes are believed to interact with the cytoplasmic tails of membrane proteins, leading to their selection and concentration. Binding of AP180 to clathrin triskelia induces their assembly into 60-70 nm coats. The chain is Clathrin coat assembly protein AP180 (Snap91) from Rattus norvegicus (Rat).